The following is a 98-amino-acid chain: Sec-independent protein translocase protein TatA (98 aa).

The helical transmembrane segment at M1–G21 threads the bilayer. Residues V43 to A98 are disordered. Positions A66 to P79 are enriched in low complexity.

It belongs to the TatA/E family. In terms of assembly, the Tat system comprises two distinct complexes: a TatABC complex, containing multiple copies of TatA, TatB and TatC subunits, and a separate TatA complex, containing only TatA subunits. Substrates initially bind to the TatABC complex, which probably triggers association of the separate TatA complex to form the active translocon.

It localises to the cell membrane. Functionally, part of the twin-arginine translocation (Tat) system that transports large folded proteins containing a characteristic twin-arginine motif in their signal peptide across membranes. TatA could form the protein-conducting channel of the Tat system. This is Sec-independent protein translocase protein TatA from Rhodococcus erythropolis (Arthrobacter picolinophilus).